Reading from the N-terminus, the 686-residue chain is Eukaryotic translation initiation factor 3 subunit B (686 aa).

The disordered stretch occupies residues 1 to 29; sequence MAKKHAGADANDSDYNEEPNFEDPPGFVD. Residues 11-21 show a composition bias toward acidic residues; it reads NDSDYNEEPNF. Positions 53–137 constitute an RRM domain; the sequence is SVVVVDNIPK…HTFAVNLFTD (85 aa). WD repeat units lie at residues 203 to 242, 289 to 327, 330 to 365, 438 to 480, and 526 to 571; these read TRERFTDTFVKWSPLGTYVVTFHKPGVAIWGGSNFQKIQK, DGMSVLSMFRWSHDDKFVARMGENSIHIYETPSFYLLDL, IKIPGIRGFSWSPTDNVIAYWVEEQNQIPARVTLME, EIRE…KPSL, and PDHF…IKRT. A coiled-coil region spans residues 590–642; the sequence is AEEKQKEIKKNLKKYYAVFEQKDRLRLTRASKELLEKRAQLRETFMEYRNKRI.

This sequence belongs to the eIF-3 subunit B family. As to quaternary structure, component of the eukaryotic translation initiation factor 3 (eIF-3) complex. The eIF-3 complex interacts with pix. Interacts with mxt.

The protein localises to the cytoplasm. Its function is as follows. RNA-binding component of the eukaryotic translation initiation factor 3 (eIF-3) complex, which is involved in protein synthesis of a specialized repertoire of mRNAs and, together with other initiation factors, stimulates binding of mRNA and methionyl-tRNAi to the 40S ribosome. The eIF-3 complex specifically targets and initiates translation of a subset of mRNAs involved in cell proliferation. The protein is Eukaryotic translation initiation factor 3 subunit B of Drosophila ananassae (Fruit fly).